The sequence spans 237 residues: MTRKVSRRLQELQKKVEDRAYEPLAALNLLKETATAKFPESAEAHIRLGIDPKYTDQQLRTTVALPKGTGQTIRVAVIARGEKVAEAKAAGADIAGSEELIEEISKGFLDFDLLIATPDVMPQVAKLGRQLGPRGLMPSPKGGTVTFDLEQAVNEFKAGKLEFRADRTGIVHVLFGKASFSADDLLANLKALQETIDRNRPSGAKGRYWRSVYISATMGPAIEVDINALRDPKLAEA.

This sequence belongs to the universal ribosomal protein uL1 family. In terms of assembly, part of the 50S ribosomal subunit.

In terms of biological role, binds directly to 23S rRNA. The L1 stalk is quite mobile in the ribosome, and is involved in E site tRNA release. Functionally, protein L1 is also a translational repressor protein, it controls the translation of the L11 operon by binding to its mRNA. The protein is Large ribosomal subunit protein uL1 of Synechococcus sp. (strain ATCC 27144 / PCC 6301 / SAUG 1402/1) (Anacystis nidulans).